Here is a 602-residue protein sequence, read N- to C-terminus: Elongation factor 4 (602 aa).

Positions 7–189 (KYIRNFSIVA…AIVNKVPAPD (183 aa)) constitute a tr-type G domain. GTP contacts are provided by residues 19–24 (DHGKST) and 136–139 (NKID).

It belongs to the TRAFAC class translation factor GTPase superfamily. Classic translation factor GTPase family. LepA subfamily.

The protein resides in the cell membrane. The enzyme catalyses GTP + H2O = GDP + phosphate + H(+). Required for accurate and efficient protein synthesis under certain stress conditions. May act as a fidelity factor of the translation reaction, by catalyzing a one-codon backward translocation of tRNAs on improperly translocated ribosomes. Back-translocation proceeds from a post-translocation (POST) complex to a pre-translocation (PRE) complex, thus giving elongation factor G a second chance to translocate the tRNAs correctly. Binds to ribosomes in a GTP-dependent manner. The protein is Elongation factor 4 of Clostridium botulinum (strain Kyoto / Type A2).